Reading from the N-terminus, the 136-residue chain is Translation initiation factor 5A (136 aa).

Position 36 is a hypusine (K36).

This sequence belongs to the eIF-5A family.

The protein localises to the cytoplasm. Functionally, functions by promoting the formation of the first peptide bond. This chain is Translation initiation factor 5A (eIF5A), found in Hyperthermus butylicus (strain DSM 5456 / JCM 9403 / PLM1-5).